Here is a 171-residue protein sequence, read N- to C-terminus: Large ribosomal subunit protein uL10 (171 aa).

The protein belongs to the universal ribosomal protein uL10 family. In terms of assembly, part of the ribosomal stalk of the 50S ribosomal subunit. The N-terminus interacts with L11 and the large rRNA to form the base of the stalk. The C-terminus forms an elongated spine to which L12 dimers bind in a sequential fashion forming a multimeric L10(L12)X complex.

Its function is as follows. Forms part of the ribosomal stalk, playing a central role in the interaction of the ribosome with GTP-bound translation factors. The protein is Large ribosomal subunit protein uL10 of Sphingopyxis alaskensis (strain DSM 13593 / LMG 18877 / RB2256) (Sphingomonas alaskensis).